Consider the following 673-residue polypeptide: Leucine zipper putative tumor suppressor 3 (673 aa).

Disordered stretches follow at residues Met1–Pro157, Phe172–Ala239, and Ile251–Pro317. A compositionally biased stretch (basic and acidic residues) spans Ser79–Gly92. A compositionally biased stretch (polar residues) spans His173–Thr186. Positions Gly215–Ser235 are enriched in low complexity. The span at Ser258 to Gly269 shows a compositional bias: gly residues. The span at Gly274 to Pro294 shows a compositional bias: low complexity. Gly residues predominate over residues Gly295–Leu307. A phosphoserine mark is found at Ser316 and Ser318. 2 coiled-coil regions span residues Pro317–Asp496 and Arg571–Glu639. The interval Arg635–Ile673 is disordered. The span at His653–Ile673 shows a compositional bias: basic and acidic residues.

It belongs to the LZTS3 family. As to quaternary structure, interacts (via C-terminus) with SHANK3 (via PDZ domain). Interacts (via coiled coil) with SIPA1L1. Can form homooligomers.

It is found in the synapse. The protein localises to the postsynaptic density. Its subcellular location is the cell projection. The protein resides in the dendritic spine. It localises to the dendrite. It is found in the cytoplasm. The protein localises to the cytoskeleton. In terms of biological role, may be involved in promoting the maturation of dendritic spines, probably via regulating SIPA1L1 levels at the postsynaptic density of synapses. In Homo sapiens (Human), this protein is Leucine zipper putative tumor suppressor 3.